The chain runs to 310 residues: GMP synthase [glutamine-hydrolyzing] subunit B (310 aa).

Residues 1–187 (MSTSSYIDQI…LGLRTDLQPF (187 aa)) form the GMPS ATP-PPase domain. ATP is bound at residue 27-33 (SGGQDSS).

In terms of assembly, heterodimer composed of a glutamine amidotransferase subunit (A) and a GMP-binding subunit (B).

The catalysed reaction is XMP + L-glutamine + ATP + H2O = GMP + L-glutamate + AMP + diphosphate + 2 H(+). It participates in purine metabolism; GMP biosynthesis; GMP from XMP (L-Gln route): step 1/1. Its function is as follows. Catalyzes the synthesis of GMP from XMP. The polypeptide is GMP synthase [glutamine-hydrolyzing] subunit B (guaAB) (Thermoplasma acidophilum (strain ATCC 25905 / DSM 1728 / JCM 9062 / NBRC 15155 / AMRC-C165)).